A 443-amino-acid chain; its full sequence is C4-dicarboxylate transport protein (443 aa).

9 helical membrane passes run 10 to 30 (SLYFQVIVAIVIGILLGHFYP), 46 to 66 (LIKMVIAPIIFCTVVSGIAGM), 78 to 98 (YALLYFEIVSTVALLIGLIVV), 143 to 163 (IVGAFANGDILQVLMFSVIFG), 199 to 219 (PIGALGAMAFTIGAYGVGSLV), 224 to 244 (LMICFYITCLLFVLVVLGGIC), 291 to 311 (VVGLVIPTGYSFNLDGTSIYL), 332 to 352 (ITLLLVLLLSSKGAAGVTGSG), and 354 to 374 (IVLAATLSAVGHLPVAGLALI).

Belongs to the dicarboxylate/amino acid:cation symporter (DAACS) (TC 2.A.23) family.

The protein localises to the cell inner membrane. Responsible for the transport of dicarboxylates such as succinate, fumarate, and malate from the periplasm across the membrane. This Pseudomonas fluorescens (strain SBW25) protein is C4-dicarboxylate transport protein.